The primary structure comprises 231 residues: MASGRSSIYQDLSEEHPRKLIPELCKQFYNLGWVTGTGGGISIKLDDEIYIAPSGVQKERIQPDDLFIQNIEGDDLQTPPDYKKLTKSQCTPLFMLAYKERSAGAVIHTHSPAAVMTTLLWPGKEFRCTHLEMIKGIYDYELNRNLMYDEELVVPIIENTLFEKDLEESMANALRDYPGTSAILVRRHGVYVWGHNWQKAKTMAECYDYLFSLAVEMHKVGLDANAVPKRY.

C90 is a substrate binding site. H108 and H110 together coordinate Zn(2+). E132 functions as the Proton donor/acceptor in the catalytic mechanism. H188 lines the Zn(2+) pocket.

This sequence belongs to the aldolase class II family. MtnB subfamily. It depends on Zn(2+) as a cofactor.

Its subcellular location is the cytoplasm. It carries out the reaction 5-(methylsulfanyl)-D-ribulose 1-phosphate = 5-methylsulfanyl-2,3-dioxopentyl phosphate + H2O. Its pathway is amino-acid biosynthesis; L-methionine biosynthesis via salvage pathway; L-methionine from S-methyl-5-thio-alpha-D-ribose 1-phosphate: step 2/6. In terms of biological role, catalyzes the dehydration of methylthioribulose-1-phosphate (MTRu-1-P) into 2,3-diketo-5-methylthiopentyl-1-phosphate (DK-MTP-1-P). This is Probable methylthioribulose-1-phosphate dehydratase from Anopheles gambiae (African malaria mosquito).